Consider the following 1814-residue polypeptide: MASSLAAQLSQIAAKSTNQLDLKAQRTAHSQSLIFDRKVASTQDFDTVYQICYEGFQELCQLDSRFTAFERTIFSEQSKAEDRTQLTAAQNKELDVALEAFLALVGGRLLLNPAVKAVEWLVRRFRIHEYNTSFTILTFLPYYTTPLFLNLLAILPEDLTPTFKVLIPYKKGSINPPRHPLVHSATTNKPFLAALNSYVLQVSRQQAHHHALLAFWAGIYTEAVAGMLDASRSGRREVEKQKHEDIVIRVLPILNDGFAMKNVSELVIGCYMVSVVLAQKASLQDKVLDGLMEAVAGSWTEETIESGLVCLAVLAQQKPETKLPRRALKAILRLDDVLKRLTEIATQYKTSHLLLGVVAGCLDDLPRQKDTARLDLLSRIFQNQLLGEPEMSKAMTLVLEATSSVHKDGAMSLDAQARLADLVQVFSQSESLQPTFQKTIAESSFDIAALEHNLQTVIDTAPAPRTVEDVEMEDVEKEEEQDNFSSAVESLSGEKLFKGSFLSTQSIPLFERLAQAFTLAVGSNEKCQTFSDLAALGKSEATKSPQYLSFFIRVFSGPYPMGTRATALNMITSFLTSTENTNLDFQALLPFLLVALTDASERVRREAAAALAAVGSLYKKNKKGEDVWARSNLYGQLKDIKWLPTRDAQKIFERAVLPSLEECIIDAAHIGRVLENTLRGVSVDANASELKKPLRLAFFTFLCSNAIELPLFTPKLGLLNILNRIDKAGGTTRTKELEPLLKTWRGFSEREVQDICEKERVPVSDVERQMVTIVTPKEKDAIMILLSNVSPHSESLRPSFIAAVFGRIKGIWARVAEDRQVVAAEQLFEISLGVSNLPLVNNCRDLLRSVQLPGSVLAQFLERIPVSLTDMEALGPAPKRRRTSQNNMIAMTVKDEAEFGKVMEKMTFILELVDSSSPETHPELADGLFQALAALHHFKSQIQSGMSYLLSLTLGSLLAIVNRSKESAKAQFDTSVIRADLVVDCVRTTESPQVQNAALLLVAGLSVIAPELVLHSVMPIFTFMGSSVLRKDDEYSVSVIDQTIDQVVPALIQSLRDQKRDVVSGTSELLLSFTAAFEHIPSHRRLRLFHALITKLGTQDFLFAVLAMLANRYAMDKDVLVLMTGLVSDASAPVELTTYSKFLGLVSDSLKPKPGISQVLLGIGSDDGREPQKVAVDLLRDLAYLFKHSSLKVKMAKTFASEDEEAIRQLRTIFSQILEQVLTIGDSVQSMKLVSQANGDVLAALFGTLTLVDFLDTIEVLLERPNDELRRKVLRLLEGRLRQNPERDSASQIRVLDFLPTLVDIIRNSADILLKHAAVACIDRIAEKYGKKDPSRVVSAAQVVASEACIGQTDDRIRIMGVLCLASMAETLGQVMIPALPEALSRSLALLELSLEEGKENSRLHDAVFSLFSALFVHIPYMISGPHLDKILLLSFKSANAEDCEDDSRQEALKMMARKVDMAATLGAVDRNWQYAVQAGPVATKETLEVVSLAVEKHPKSATGKNIGVLSSILFKAFDLRREQLALGANATFDAADVDEIEDALNDVTIKMIYKLNDTTFRPIFTKMLDWATSGLPKKDTQGSWARLTTFYKFLQVFFGTLQSIVTGYASYIIESVVSVLGKASPADKSTKALWLATMRLLRNAFEHDQDGMPVLPINPCLKLTITEFWQSPSHLNQISTPLINQLAHATNSSTAATVIAEAVPAITELAVAADSTDNHKELNTALMKFLRPSAGPNGKPAGGENPHTRLAALKAEQSLTEQLGEEWLALLPEMLPYISELMEDEDENVEREVRKWVKQIENVLGEKLDDMLT.

The HEAT 1 repeat unit spans residues 583-620 (LDFQALLPFLLVALTDASERVRREAAAALAAVGSLYKK). 2 helical membrane-spanning segments follow: residues 942-962 (IQSGMSYLLSLTLGSLLAIVN) and 998-1018 (ALLLVAGLSVIAPELVLHSVM). HEAT repeat units follow at residues 1042-1079 (QTIDQVVPALIQSLRDQKRDVVSGTSELLLSFTAAFEH), 1249-1286 (LTLVDFLDTIEVLLERPNDELRRKVLRLLEGRLRQNPE), 1293-1331 (IRVLDFLPTLVDIIRNSADILLKHAAVACIDRIAEKYGK), and 1770-1807 (ALLPEMLPYISELMEDEDENVEREVRKWVKQIENVLGE).

It belongs to the HEATR1/UTP10 family. Component of the ribosomal small subunit (SSU) processome.

It is found in the nucleus. Its subcellular location is the nucleolus. The protein localises to the membrane. In terms of biological role, involved in nucleolar processing of pre-18S ribosomal RNA. Involved in ribosome biosynthesis. In Neosartorya fischeri (strain ATCC 1020 / DSM 3700 / CBS 544.65 / FGSC A1164 / JCM 1740 / NRRL 181 / WB 181) (Aspergillus fischerianus), this protein is U3 small nucleolar RNA-associated protein 10.